A 174-amino-acid polypeptide reads, in one-letter code: SDLWVQKMKTYFNRIDFDKDGAITRKDFESMATRFAKESEMKPEHAKVLMDSLTGVWDKFLANVAGGKGIDQATFISSMKEKVKDPNAKAVVEGPLPLFFRAVDTNEDNMISRDEYGIFFNMLGLNPDMAPASFDAIDTNNDGLLSQEEFVTAGSDFFINDQDSPNKVFWGPLV.

Serine 1 carries the post-translational modification N-acetylserine. 4 EF-hand domains span residues leucine 3–glutamate 38, glycine 55–alanine 90, valine 91–asparagine 126, and leucine 125–asparagine 160. Residues aspartate 16, aspartate 18, aspartate 20, and aspartate 27 each contribute to the Ca(2+) site. Ca(2+) contacts are provided by aspartate 104, asparagine 106, aspartate 108, methionine 110, glutamate 115, aspartate 138, asparagine 140, aspartate 142, and glutamate 149.

Functionally, like parvalbumins, SCPs seem to be more abundant in fast contracting muscles, but no functional relationship can be established from this distribution. In Perinereis vancaurica tetradentata (Sandworm), this protein is Sarcoplasmic calcium-binding protein.